The chain runs to 98 residues: Acylphosphatase (98 aa).

The region spanning 12–98 is the Acylphosphatase-like domain; that stretch reads TYYVRVRGVV…ERRFERFQQQ (87 aa). Active-site residues include R27 and N45.

The protein belongs to the acylphosphatase family.

The enzyme catalyses an acyl phosphate + H2O = a carboxylate + phosphate + H(+). The sequence is that of Acylphosphatase (acyP) from Burkholderia lata (strain ATCC 17760 / DSM 23089 / LMG 22485 / NCIMB 9086 / R18194 / 383).